The primary structure comprises 620 residues: Kelch-like protein 8 (620 aa).

A compositionally biased stretch (polar residues) spans 1 to 10; it reads MASDSMSSKQ. A disordered region spans residues 1 to 35; the sequence is MASDSMSSKQARNHITKGKRQQQHQQIKNRSSISD. The residue at position 2 (Ala-2) is an N-acetylalanine. Over residues 11–22 the composition is skewed to basic residues; the sequence is ARNHITKGKRQQ. Over residues 23–34 the composition is skewed to polar residues; that stretch reads QHQQIKNRSSIS. A BTB domain is found at 67 to 134; sequence CDVTLKVGSK…VYSSRLTLTV (68 aa). The BACK domain maps to 169-270; sequence CLAVRAFAES…LPVDFLMGVV (102 aa). Kelch repeat units lie at residues 319–366, 367–413, 415–460, 462–507, 508–554, and 556–601; these read VLFC…SVEG, KVYA…SLGG, IYAI…ALVN, VYAV…KLHG, CLYV…TVMG, and IFAV…VCSC.

In terms of assembly, component of the BCR(KLHL8) E3 ubiquitin ligase complex, at least composed of CUL3, KLHL8 and RBX1. Interacts with RAPSN.

It participates in protein modification; protein ubiquitination. Functionally, substrate-specific adapter of a BCR (BTB-CUL3-RBX1) E3 ubiquitin ligase complex required for The BCR(KLHL8) ubiquitin ligase complex mediates ubiquitination and degradation of RAPSN. This chain is Kelch-like protein 8 (KLHL8), found in Homo sapiens (Human).